The primary structure comprises 560 residues: uncharacterized protein (560 aa).

At 1 to 17 (MEPKRKSGSLAKHDLPQ) the chain is on the cytoplasmic side. Residues 18–38 (FYLLIMLYLAQGIPVGLAFGT) form a helical membrane-spanning segment. At 39–54 (VPFLLKSLAKETSFTS) the chain is on the extracellular side. A helical membrane pass occupies residues 55–75 (LGIFSMATYPYSLKIIWSPIV). At 76–88 (DSLYNKRIGRRRS) the chain is on the cytoplasmic side. The helical transmembrane segment at 89–109 (WIIPVQFVSGFVLWALGWCIS) threads the bilayer. Topologically, residues 110-139 (QGIIFDGVDDAFHNRGNGTLHSVSIKNLTW) are extracellular. Residues 140–160 (WFGLLVFLCATQDIAVDGWAL) traverse the membrane as a helical segment. The Cytoplasmic portion of the chain corresponds to 161–172 (TILSKESLSYAS). The helical transmembrane segment at 173–193 (TAQTIGLNIGYFMSFTIFLSL) threads the bilayer. Residues 194-214 (NSSDFANKYFRNIPLDHGFIS) are Extracellular-facing. A helical membrane pass occupies residues 215 to 235 (LGGYMKFSGMLYIVITIYIIF). Topologically, residues 236–329 (CTKEKPYVEY…KLLEQGFKRE (94 aa)) are cytoplasmic. The chain crosses the membrane as a helical span at residues 330-350 (DLAVTVLIDLPFEIIFGYYVV). Residues 351–374 (KWSSDKDPMIRDNRRLRNSTGTNK) lie on the Extracellular side of the membrane. The chain crosses the membrane as a helical span at residues 375–395 (VIKFLVGDAGVLTPWLWGFLG). The Cytoplasmic segment spans residues 396 to 421 (RLAAAVLGSYVVKQFPKDGEISTGYF). Residues 422-442 (CLVIFQHLLGSFMNTVQFIGI) form a helical membrane-spanning segment. Residues 443-521 (SAFHTRVADP…LNGTVTILRD (79 aa)) are Extracellular-facing. Residues 522 to 542 (GYYITNLICIVVGLFLYFGYL) form a helical membrane-spanning segment. Residues 543–560 (KRKILHLQSLPISSWRCT) lie on the Cytoplasmic side of the membrane.

It localises to the membrane. This is an uncharacterized protein from Saccharomyces cerevisiae (strain ATCC 204508 / S288c) (Baker's yeast).